Consider the following 345-residue polypeptide: Thylakoid lumenal 29 kDa protein, chloroplastic (345 aa).

It belongs to the peroxidase family.

It is found in the plastid. It localises to the chloroplast thylakoid lumen. The chain is Thylakoid lumenal 29 kDa protein, chloroplastic (CLEB3J9) from Solanum lycopersicum (Tomato).